Consider the following 96-residue polypeptide: MSRRCDLTGKAVQTGNLVSHSNHKTRTRFLPNLCNVTLISDVLQRKVRFRVAVAALRSVEHRGGLDAFLAKADDAELSLGARAIKREILKKQAAAS.

The protein belongs to the bacterial ribosomal protein bL28 family.

This chain is Large ribosomal subunit protein bL28, found in Methylocella silvestris (strain DSM 15510 / CIP 108128 / LMG 27833 / NCIMB 13906 / BL2).